Consider the following 409-residue polypeptide: Argininosuccinate synthase (409 aa).

9 to 17 (AYSGGLDTS) serves as a coordination point for ATP. An L-citrulline-binding site is contributed by Tyr-86. Gly-116 contributes to the ATP binding site. L-aspartate contacts are provided by Thr-118, Asn-122, and Asp-123. Asn-122 is a binding site for L-citrulline. The L-citrulline site is built by Arg-126, Ser-174, Ser-183, Glu-259, and Tyr-271.

Belongs to the argininosuccinate synthase family. Type 1 subfamily. Homotetramer.

It localises to the cytoplasm. The catalysed reaction is L-citrulline + L-aspartate + ATP = 2-(N(omega)-L-arginino)succinate + AMP + diphosphate + H(+). Its pathway is amino-acid biosynthesis; L-arginine biosynthesis; L-arginine from L-ornithine and carbamoyl phosphate: step 2/3. The polypeptide is Argininosuccinate synthase (Halalkalibacterium halodurans (strain ATCC BAA-125 / DSM 18197 / FERM 7344 / JCM 9153 / C-125) (Bacillus halodurans)).